Reading from the N-terminus, the 61-residue chain is Small ribosomal subunit protein uS14B (61 aa).

4 residues coordinate Zn(2+): Cys-24, Cys-27, Cys-40, and Cys-43.

This sequence belongs to the universal ribosomal protein uS14 family. Zinc-binding uS14 subfamily. Part of the 30S ribosomal subunit. Contacts proteins S3 and S10. It depends on Zn(2+) as a cofactor.

Its function is as follows. Binds 16S rRNA, required for the assembly of 30S particles and may also be responsible for determining the conformation of the 16S rRNA at the A site. The polypeptide is Small ribosomal subunit protein uS14B (Mycolicibacterium gilvum (strain PYR-GCK) (Mycobacterium gilvum (strain PYR-GCK))).